Here is a 244-residue protein sequence, read N- to C-terminus: Triosephosphate isomerase (244 aa).

9–11 (NWK) contributes to the substrate binding site. Catalysis depends on histidine 93, which acts as the Electrophile. Catalysis depends on glutamate 160, which acts as the Proton acceptor. Glycine 166 and serine 206 together coordinate substrate.

Belongs to the triosephosphate isomerase family. In terms of assembly, homodimer.

It is found in the cytoplasm. It catalyses the reaction D-glyceraldehyde 3-phosphate = dihydroxyacetone phosphate. The protein operates within carbohydrate biosynthesis; gluconeogenesis. It participates in carbohydrate degradation; glycolysis; D-glyceraldehyde 3-phosphate from glycerone phosphate: step 1/1. Its function is as follows. Involved in the gluconeogenesis. Catalyzes stereospecifically the conversion of dihydroxyacetone phosphate (DHAP) to D-glyceraldehyde-3-phosphate (G3P). This Mycoplasma pneumoniae (strain ATCC 29342 / M129 / Subtype 1) (Mycoplasmoides pneumoniae) protein is Triosephosphate isomerase.